We begin with the raw amino-acid sequence, 160 residues long: MGVFNYESETTSVIPAARLFKAFILDGDNLIPKVAPQAISSVENIEGNGGPGTIKKITFPEGSPFKYVKERVDEVDHANFKYSYSMIEGGALGDTLEKICNEIKIVATPDGGSILKISNKYHTKGDHEMKAEHMKAIKEKGEALLRAVESYLLAHSDAYN.

Brassinolide-binding residues include Lys-55, Tyr-82, Tyr-84, and Asn-101.

The protein belongs to the BetVI family.

The protein localises to the cytoplasm. May be a general steroid carrier protein. In Betula pendula (European white birch), this protein is Major pollen allergen Bet v 1-M/N (BETV1M).